We begin with the raw amino-acid sequence, 248 residues long: Probable transcriptional regulatory protein RPA1097 (248 aa).

The tract at residues 1-21 is disordered; sequence MAGHSQFKNIMHRKGRQDAQR.

This sequence belongs to the TACO1 family.

It localises to the cytoplasm. The sequence is that of Probable transcriptional regulatory protein RPA1097 from Rhodopseudomonas palustris (strain ATCC BAA-98 / CGA009).